Here is a 358-residue protein sequence, read N- to C-terminus: HTH-type transcriptional regulator IpsA (358 aa).

The region spanning 8 to 63 (GTLASIAAKLGISRTTVSNAYNRPEQLSAELRQRILDTAEDMGYLGPDPVARSLRT) is the HTH lacI-type domain. A DNA-binding region (H-T-H motif) is located at residues 10–29 (LASIAAKLGISRTTVSNAYN).

As to quaternary structure, homodimer.

Myo-inositol causes the dissociation of the IpsA-DNA complex in vitro. Functionally, plays a role in the regulation of cell wall biogenesis. Inositol-dependent transcriptional activator of ino1, which encodes inositol phosphate synthase. Also regulates other target genes, which are most likely involved in the synthesis of inositol-derived cell wall components and mycothiol. Acts by binding to a conserved palindromic motif within the promoter regions. In Corynebacterium glutamicum (strain ATCC 13032 / DSM 20300 / JCM 1318 / BCRC 11384 / CCUG 27702 / LMG 3730 / NBRC 12168 / NCIMB 10025 / NRRL B-2784 / 534), this protein is HTH-type transcriptional regulator IpsA.